The following is a 225-amino-acid chain: RNA chaperone ProQ (225 aa).

The tract at residues 103–173 (LEEAKARVQT…APREERHTPV (71 aa)) is disordered. Over residues 109–118 (RVQTQRAAQQ) the composition is skewed to low complexity. The span at 137-146 (RERKPRPQQP) shows a compositional bias: basic residues. Residues 147-156 (RRKEGAEQRK) show a composition bias toward basic and acidic residues.

This sequence belongs to the ProQ family.

The protein resides in the cytoplasm. Its function is as follows. RNA chaperone with significant RNA binding, RNA strand exchange and RNA duplexing activities. May regulate ProP activity through an RNA-based, post-transcriptional mechanism. This chain is RNA chaperone ProQ, found in Klebsiella pneumoniae (strain 342).